Reading from the N-terminus, the 290-residue chain is Ribosomal RNA small subunit methyltransferase A (290 aa).

S-adenosyl-L-methionine-binding residues include asparagine 27, leucine 29, glycine 54, glutamate 75, aspartate 100, and asparagine 125.

It belongs to the class I-like SAM-binding methyltransferase superfamily. rRNA adenine N(6)-methyltransferase family. RsmA subfamily.

Its subcellular location is the cytoplasm. The enzyme catalyses adenosine(1518)/adenosine(1519) in 16S rRNA + 4 S-adenosyl-L-methionine = N(6)-dimethyladenosine(1518)/N(6)-dimethyladenosine(1519) in 16S rRNA + 4 S-adenosyl-L-homocysteine + 4 H(+). Functionally, specifically dimethylates two adjacent adenosines (A1518 and A1519) in the loop of a conserved hairpin near the 3'-end of 16S rRNA in the 30S particle. May play a critical role in biogenesis of 30S subunits. The polypeptide is Ribosomal RNA small subunit methyltransferase A (Streptococcus pyogenes serotype M3 (strain ATCC BAA-595 / MGAS315)).